Consider the following 561-residue polypeptide: Dihydroxy-acid dehydratase (561 aa).

A [2Fe-2S] cluster-binding site is contributed by C50. Mg(2+) is bound at residue D82. C123 lines the [2Fe-2S] cluster pocket. D124 and K125 together coordinate Mg(2+). An N6-carboxylysine modification is found at K125. Residue C195 participates in [2Fe-2S] cluster binding. E447 contributes to the Mg(2+) binding site. The active-site Proton acceptor is S473.

This sequence belongs to the IlvD/Edd family. In terms of assembly, homodimer. It depends on [2Fe-2S] cluster as a cofactor. Mg(2+) is required as a cofactor.

It catalyses the reaction (2R)-2,3-dihydroxy-3-methylbutanoate = 3-methyl-2-oxobutanoate + H2O. The catalysed reaction is (2R,3R)-2,3-dihydroxy-3-methylpentanoate = (S)-3-methyl-2-oxopentanoate + H2O. It functions in the pathway amino-acid biosynthesis; L-isoleucine biosynthesis; L-isoleucine from 2-oxobutanoate: step 3/4. Its pathway is amino-acid biosynthesis; L-valine biosynthesis; L-valine from pyruvate: step 3/4. In terms of biological role, functions in the biosynthesis of branched-chain amino acids. Catalyzes the dehydration of (2R,3R)-2,3-dihydroxy-3-methylpentanoate (2,3-dihydroxy-3-methylvalerate) into 2-oxo-3-methylpentanoate (2-oxo-3-methylvalerate) and of (2R)-2,3-dihydroxy-3-methylbutanoate (2,3-dihydroxyisovalerate) into 2-oxo-3-methylbutanoate (2-oxoisovalerate), the penultimate precursor to L-isoleucine and L-valine, respectively. This Synechocystis sp. (strain ATCC 27184 / PCC 6803 / Kazusa) protein is Dihydroxy-acid dehydratase.